Here is a 297-residue protein sequence, read N- to C-terminus: Transmembrane protein 169 (297 aa).

The interval 1–85 is disordered; that stretch reads MEEPTAVEGQ…KEEEGDDFLD (85 aa). At 1 to 159 the chain is on the extracellular side; it reads MEEPTAVEGQ…CQMGADRGPH (159 aa). Positions 61-85 are enriched in acidic residues; sequence KTDEEPGESEGGDQPKEEEGDDFLD. Residues 160–180 form a helical membrane-spanning segment; sequence VVLWTLICLPVVFILSFVVSF. Residues 181-210 lie on the Cytoplasmic side of the membrane; the sequence is YYGTITWYNIFLVYNEERTFWHKISYCPCL. The chain crosses the membrane as a helical span at residues 211–231; that stretch reads VLFYPVLIMAMASSLGLYAAV. The Extracellular portion of the chain corresponds to 232-297; that stretch reads VQLSWSWEAW…PIQEVETSTV (66 aa).

It localises to the membrane. In Homo sapiens (Human), this protein is Transmembrane protein 169 (TMEM169).